A 633-amino-acid polypeptide reads, in one-letter code: NADPH-dependent diflavin oxidoreductase 1 (633 aa).

The Flavodoxin-like domain maps to 5 to 149 (CTIIYATESG…EVEKWSQELI (145 aa)). Residues 11–16 (TESGTS), 58–61 (STTG), and Asp131 each bind FMN. Residues 196-442 (TQFYKSKLKV…FIKESGARLP (247 aa)) form the FAD-binding FR-type domain. Residues 377–380 (RPFS) and 412–415 (GLCS) contribute to the FAD site. NADP(+) contacts are provided by residues Thr456, 520-521 (SR), 528-532 (KVYVQ), and Asp565. A disordered region spans residues 580 to 610 (KNNNNNNNNNNNNNNNNNNNNNNNNNDDENN). A compositionally biased stretch (low complexity) spans 581-604 (NNNNNNNNNNNNNNNNNNNNNNNN). Trp633 contributes to the FAD binding site.

This sequence belongs to the NADPH-dependent diflavin oxidoreductase NDOR1 family. In the N-terminal section; belongs to the flavodoxin family. The protein in the C-terminal section; belongs to the flavoprotein pyridine nucleotide cytochrome reductase family. FAD is required as a cofactor. The cofactor is FMN.

The protein localises to the cytoplasm. The enzyme catalyses 2 oxidized [2Fe-2S]-[protein] + NADPH = 2 reduced [2Fe-2S]-[protein] + NADP(+) + H(+). Functionally, NADPH-dependent reductase which is a central component of the cytosolic iron-sulfur (Fe-S) protein assembly (CIA) machinery. Transfers electrons from NADPH via its FAD and FMN prosthetic groups to the [2Fe-2S] cluster of the anamorsin/DRE2 homolog, another key component of the CIA machinery. In turn, this reduced cluster provides electrons for assembly of cytosolic iron-sulfur cluster proteins. This Dictyostelium discoideum (Social amoeba) protein is NADPH-dependent diflavin oxidoreductase 1 (redC).